The following is a 322-amino-acid chain: ATP-dependent 6-phosphofructokinase (322 aa).

Gly-11 contributes to the ATP binding site. Arg-21–Arg-25 serves as a coordination point for ADP. ATP contacts are provided by residues Arg-72–Cys-73 and Gly-102–Ser-105. Mg(2+) is bound at residue Asp-103. Substrate is bound at residue Thr-127–Asp-129. The active-site Proton acceptor is the Asp-129. Residue Arg-156 coordinates ADP. Residues Arg-164 and Met-171–Arg-173 contribute to the substrate site. ADP is bound by residues Gly-187 to Glu-189, Arg-213, and Lys-215 to His-217. Substrate is bound by residues Glu-224, Arg-245, and His-251 to Arg-254.

Belongs to the phosphofructokinase type A (PFKA) family. ATP-dependent PFK group I subfamily. Prokaryotic clade 'B1' sub-subfamily. Homotetramer. The cofactor is Mg(2+).

It is found in the cytoplasm. The catalysed reaction is beta-D-fructose 6-phosphate + ATP = beta-D-fructose 1,6-bisphosphate + ADP + H(+). Its pathway is carbohydrate degradation; glycolysis; D-glyceraldehyde 3-phosphate and glycerone phosphate from D-glucose: step 3/4. Allosterically activated by ADP and other diphosphonucleosides, and allosterically inhibited by phosphoenolpyruvate. Its function is as follows. Catalyzes the phosphorylation of D-fructose 6-phosphate to fructose 1,6-bisphosphate by ATP, the first committing step of glycolysis. The chain is ATP-dependent 6-phosphofructokinase from Staphylococcus aureus (strain JH1).